The chain runs to 219 residues: dTTP/UTP pyrophosphatase (219 aa).

The Proton acceptor role is filled by D79.

The protein belongs to the Maf family. YhdE subfamily. The cofactor is a divalent metal cation.

It localises to the cytoplasm. It catalyses the reaction dTTP + H2O = dTMP + diphosphate + H(+). The catalysed reaction is UTP + H2O = UMP + diphosphate + H(+). Nucleoside triphosphate pyrophosphatase that hydrolyzes dTTP and UTP. May have a dual role in cell division arrest and in preventing the incorporation of modified nucleotides into cellular nucleic acids. The polypeptide is dTTP/UTP pyrophosphatase (Oleidesulfovibrio alaskensis (strain ATCC BAA-1058 / DSM 17464 / G20) (Desulfovibrio alaskensis)).